Reading from the N-terminus, the 184-residue chain is Ribosome-recycling factor (184 aa).

The protein belongs to the RRF family.

The protein resides in the cytoplasm. Its function is as follows. Responsible for the release of ribosomes from messenger RNA at the termination of protein biosynthesis. May increase the efficiency of translation by recycling ribosomes from one round of translation to another. This Stenotrophomonas maltophilia (strain K279a) protein is Ribosome-recycling factor.